A 294-amino-acid polypeptide reads, in one-letter code: Glucosamine kinase GspK (294 aa).

T12 contributes to the ATP binding site. Residue D101 coordinates substrate. ATP is bound at residue T122. Substrate-binding positions include G139–E141 and D146. ATP is bound at residue G202.

This sequence belongs to the eukaryotic-type N-acetylglucosamine kinase family.

The protein resides in the cytoplasm. It carries out the reaction D-glucosamine + ATP = D-glucosamine 6-phosphate + ADP + H(+). In terms of biological role, ATP-dependent kinase, which is specific for glucosamine. Does not show kinase activity with any other sugar. The sequence is that of Glucosamine kinase GspK (gspK) from Vibrio cholerae serotype O1 (strain ATCC 39315 / El Tor Inaba N16961).